A 79-amino-acid polypeptide reads, in one-letter code: Exodeoxyribonuclease 7 small subunit (79 aa).

Belongs to the XseB family. Heterooligomer composed of large and small subunits.

Its subcellular location is the cytoplasm. The enzyme catalyses Exonucleolytic cleavage in either 5'- to 3'- or 3'- to 5'-direction to yield nucleoside 5'-phosphates.. In terms of biological role, bidirectionally degrades single-stranded DNA into large acid-insoluble oligonucleotides, which are then degraded further into small acid-soluble oligonucleotides. This Shouchella clausii (strain KSM-K16) (Alkalihalobacillus clausii) protein is Exodeoxyribonuclease 7 small subunit.